Reading from the N-terminus, the 179-residue chain is Large ribosomal subunit protein uL6 (179 aa).

Belongs to the universal ribosomal protein uL6 family. As to quaternary structure, part of the 50S ribosomal subunit.

This protein binds to the 23S rRNA, and is important in its secondary structure. It is located near the subunit interface in the base of the L7/L12 stalk, and near the tRNA binding site of the peptidyltransferase center. In Prochlorococcus marinus (strain NATL2A), this protein is Large ribosomal subunit protein uL6.